A 399-amino-acid chain; its full sequence is Acetate kinase (399 aa).

Asparagine 8 contributes to the Mg(2+) binding site. Lysine 15 provides a ligand contact to ATP. Residue arginine 89 coordinates substrate. Aspartate 147 (proton donor/acceptor) is an active-site residue. ATP is bound by residues 207-211 (HMGNG), 284-286 (DMR), and 332-336 (GIGEN). Glutamate 385 contributes to the Mg(2+) binding site.

It belongs to the acetokinase family. In terms of assembly, homodimer. Mg(2+) serves as cofactor. Mn(2+) is required as a cofactor.

The protein localises to the cytoplasm. It carries out the reaction acetate + ATP = acetyl phosphate + ADP. It functions in the pathway metabolic intermediate biosynthesis; acetyl-CoA biosynthesis; acetyl-CoA from acetate: step 1/2. Catalyzes the formation of acetyl phosphate from acetate and ATP. Can also catalyze the reverse reaction. The protein is Acetate kinase of Streptococcus mutans serotype c (strain ATCC 700610 / UA159).